The chain runs to 435 residues: F-box/FBD/LRR-repeat protein At5g44980 (435 aa).

Residues 3 to 49 (RDYISELPDSLLTQILLELRTKDSVKTSVLSKRWRNLWLNVPGLELF) form the F-box domain. 6 LRR repeats span residues 88 to 114 (CKGY…YVFM), 138 to 162 (LHNV…KLEN), 165 to 190 (HGED…ELIR), 191 to 217 (PFDI…TLHF), 250 to 275 (VKNL…DLRM), and 324 to 349 (MWSS…ILEY). The region spanning 355-405 (REQVDFTNVPQCLISTLEYVEIKEPNEKSTIKLVNYFLENSAVLKKLTLRF) is the FBD domain.

The polypeptide is F-box/FBD/LRR-repeat protein At5g44980 (Arabidopsis thaliana (Mouse-ear cress)).